The chain runs to 486 residues: Bifunctional protein GlmU (486 aa).

A pyrophosphorylase region spans residues 1–241 (MSASDSSSAV…ARELAGVNDR (241 aa)). Residues 13–16 (LAAG), Lys-27, Gln-84, and 89–90 (GT) each bind UDP-N-acetyl-alpha-D-glucosamine. Position 114 (Asp-114) interacts with Mg(2+). UDP-N-acetyl-alpha-D-glucosamine contacts are provided by Gly-151, Glu-166, Asn-181, and Asn-239. Residue Asn-239 coordinates Mg(2+). The interval 242–262 (VQLAEAGAELNRRTVEAAMRG) is linker. An N-acetyltransferase region spans residues 263 to 486 (GATIVDPATT…AQNSVPNQEG (224 aa)). Arg-344 and Lys-362 together coordinate UDP-N-acetyl-alpha-D-glucosamine. His-374 serves as the catalytic Proton acceptor. 2 residues coordinate UDP-N-acetyl-alpha-D-glucosamine: Tyr-377 and Asn-388. Acetyl-CoA-binding positions include Ala-391, 397–398 (NY), Ser-416, and Ala-434. Residues 464–486 (KRPGTAAADAAAAAQNSVPNQEG) are disordered.

The protein in the N-terminal section; belongs to the N-acetylglucosamine-1-phosphate uridyltransferase family. In the C-terminal section; belongs to the transferase hexapeptide repeat family. In terms of assembly, homotrimer. Requires Mg(2+) as cofactor.

It localises to the cytoplasm. The catalysed reaction is alpha-D-glucosamine 1-phosphate + acetyl-CoA = N-acetyl-alpha-D-glucosamine 1-phosphate + CoA + H(+). It carries out the reaction N-acetyl-alpha-D-glucosamine 1-phosphate + UTP + H(+) = UDP-N-acetyl-alpha-D-glucosamine + diphosphate. Its pathway is nucleotide-sugar biosynthesis; UDP-N-acetyl-alpha-D-glucosamine biosynthesis; N-acetyl-alpha-D-glucosamine 1-phosphate from alpha-D-glucosamine 6-phosphate (route II): step 2/2. It functions in the pathway nucleotide-sugar biosynthesis; UDP-N-acetyl-alpha-D-glucosamine biosynthesis; UDP-N-acetyl-alpha-D-glucosamine from N-acetyl-alpha-D-glucosamine 1-phosphate: step 1/1. The protein operates within bacterial outer membrane biogenesis; LPS lipid A biosynthesis. Functionally, catalyzes the last two sequential reactions in the de novo biosynthetic pathway for UDP-N-acetylglucosamine (UDP-GlcNAc). The C-terminal domain catalyzes the transfer of acetyl group from acetyl coenzyme A to glucosamine-1-phosphate (GlcN-1-P) to produce N-acetylglucosamine-1-phosphate (GlcNAc-1-P), which is converted into UDP-GlcNAc by the transfer of uridine 5-monophosphate (from uridine 5-triphosphate), a reaction catalyzed by the N-terminal domain. The sequence is that of Bifunctional protein GlmU from Corynebacterium efficiens (strain DSM 44549 / YS-314 / AJ 12310 / JCM 11189 / NBRC 100395).